We begin with the raw amino-acid sequence, 260 residues long: MQNTLLRTYINSPLEQFEVKTFLGLNTPFIDLSGLNITTFTLYTIIVLLVVSSLYVLSNNNNKIIGSRWLLSQEVIYDTILNMVKGQIKGKDWGYYFPFIYTLFMFILISNLISMIPYSYALTAQFVFIISLSMIIWLGITILSLFKHGWVFFSLFVPSGTALPLVPLLVVIELLSYVARAFSLGLRLSANIFSGHLLMAILAGLTMTFVQINIFTLILGFIPLAIILIIMCLEFGIAIIQAYVFSILASSYLKDGLYLH.

A propeptide spans 1 to 11 (removed in mature form); the sequence is MQNTLLRTYIN. The next 6 helical transmembrane spans lie at 37-57, 96-116, 126-146, 152-172, 192-212, and 217-237; these read ITTF…LYVL, YFPF…ISMI, FVFI…LSLF, FFSL…LVVI, IFSG…FVQI, and LILG…EFGI.

It belongs to the ATPase A chain family. F-type ATPases have 2 components, CF(1) - the catalytic core - and CF(0) - the membrane proton channel. CF(1) has five subunits: alpha(3), beta(3), gamma(1), delta(1), epsilon(1). CF(0) has three main subunits: a, b and c.

The protein localises to the mitochondrion inner membrane. In terms of biological role, mitochondrial membrane ATP synthase (F(1)F(0) ATP synthase or Complex V) produces ATP from ADP in the presence of a proton gradient across the membrane which is generated by electron transport complexes of the respiratory chain. F-type ATPases consist of two structural domains, F(1) - containing the extramembraneous catalytic core and F(0) - containing the membrane proton channel, linked together by a central stalk and a peripheral stalk. During catalysis, ATP synthesis in the catalytic domain of F(1) is coupled via a rotary mechanism of the central stalk subunits to proton translocation. Key component of the proton channel; it may play a direct role in the translocation of protons across the membrane. The protein is ATP synthase subunit a (ATP6) of Candida glabrata (strain ATCC 2001 / BCRC 20586 / JCM 3761 / NBRC 0622 / NRRL Y-65 / CBS 138) (Yeast).